The sequence spans 1004 residues: 26S proteasome non-ATPase regulatory subunit 1 homolog A (1004 aa).

N-acetylalanine is present on alanine 2. Lysine 166 participates in a covalent cross-link: Glycyl lysine isopeptide (Lys-Gly) (interchain with G-Cter in ubiquitin). PC repeat units lie at residues 412–447 (SATAGLGVIHRGHLQQGRSLMAPYLPQGGAGGGGSP), 452–485 (GALYALGLIHANHGEGIKQFLRDSLRSTNVEVIQ), 487–521 (GACLGLGLSALGTADEEIYDDVKSVLYTDSAVAGE), 522–555 (AAGISMGLLLVGTATEKASEMLAYAHETQHEKII), 557–590 (GLALGIALTVYGREEGADTLIEQMTRDQDPIIRY), 591–626 (GGMYALALAYSGTANNKAIRQLLHFAVSDVSDDVRR), 627–659 (TAVLALGFVLYSDPEQTPRIVSLLSESYNPHVR), 661–695 (GAALAVGISCAGTGLSEAISLLEPLTSDVVDFVRQ), 696–736 (GALI…DTMS), and 739–771 (GAILASGILDAGGRNVTIRLLSKTKHDKVTAVI). Disordered stretches follow at residues 858 to 905 (EQKA…KKAP) and 959 to 1004 (VLSL…EYAS). Position 896 is a phosphoserine (serine 896). Over residues 965–987 (APTSTASPATGTAAAAQGTPASA) the composition is skewed to low complexity.

Belongs to the proteasome subunit S1 family. Component of the 19S regulatory particle (RP/PA700) base subcomplex of the 26S proteasome. The 26S proteasome is composed of a core protease (CP), known as the 20S proteasome, capped at one or both ends by the 19S regulatory particle (RP/PA700). The RP/PA700 complex is composed of at least 17 different subunits in two subcomplexes, the base and the lid, which form the portions proximal and distal to the 20S proteolytic core, respectively. In terms of tissue distribution, ubiquitous with highest expression in flowers.

Acts as a regulatory subunit of the 26 proteasome which is involved in the ATP-dependent degradation of ubiquitinated proteins. This Arabidopsis thaliana (Mouse-ear cress) protein is 26S proteasome non-ATPase regulatory subunit 1 homolog A (RPN2A).